Reading from the N-terminus, the 88-residue chain is Arminin 7965 (88 aa).

The N-terminal stretch at 1-18 (MKTVFAILFLTFIAFTYA) is a signal peptide. The propeptide occupies 19–57 (KSYEDVKEEIKNEVEREIFEDLEEESDVLDSNVRELNDA). Position 85 is an alanine amide (Ala85).

It belongs to the arminin family. In terms of tissue distribution, expressed in entodermal epithelium along the body column.

The protein resides in the secreted. The protein localises to the target cell membrane. Antimicrobial peptide with a broad-spectrum antimicrobial activity. Keeps its antibacterial activity under a wide range of salt concentrations that mimic physiological conditions of human blood, which is surprising, since Hydra is an obligate freshwater animal with nearly no salt tolerance. Does not affect red blood cells. The sequence is that of Arminin 7965 from Hydra vulgaris (Hydra).